Here is a 92-residue protein sequence, read N- to C-terminus: Bombyxin A-7 (92 aa).

The first 19 residues, 1 to 19 (MKLLLAIALMLTIVMWVST), serve as a signal peptide directing secretion. A Pyrrolidone carboxylic acid modification is found at Gln20. 3 disulfides stabilise this stretch: Cys29-Cys79, Cys41-Cys92, and Cys78-Cys83. A propeptide spans 50 to 70 (SDAQYASYGSAWLMPYSEGRG) (c peptide like).

Belongs to the insulin family. In terms of assembly, heterodimer of a B chain and an A chain linked by two disulfide bonds.

The protein localises to the secreted. Brain peptide responsible for activation of prothoracic glands to produce ecdysone in insects. The polypeptide is Bombyxin A-7 (BBXA7) (Bombyx mori (Silk moth)).